A 181-amino-acid chain; its full sequence is ATP-dependent protease subunit HslV (181 aa).

Threonine 6 is an active-site residue. Glycine 162, cysteine 165, and threonine 168 together coordinate Na(+).

This sequence belongs to the peptidase T1B family. HslV subfamily. As to quaternary structure, a double ring-shaped homohexamer of HslV is capped on each side by a ring-shaped HslU homohexamer. The assembly of the HslU/HslV complex is dependent on binding of ATP.

It localises to the cytoplasm. It carries out the reaction ATP-dependent cleavage of peptide bonds with broad specificity.. With respect to regulation, allosterically activated by HslU binding. In terms of biological role, protease subunit of a proteasome-like degradation complex believed to be a general protein degrading machinery. The chain is ATP-dependent protease subunit HslV from Nitratidesulfovibrio vulgaris (strain ATCC 29579 / DSM 644 / CCUG 34227 / NCIMB 8303 / VKM B-1760 / Hildenborough) (Desulfovibrio vulgaris).